A 241-amino-acid polypeptide reads, in one-letter code: DnaJ homolog subfamily C member 4 (241 aa).

Residues 34-99 form the J domain; that stretch reads TYYELLGVHP…QSRRSYDDQL (66 aa). A compositionally biased stretch (basic and acidic residues) spans 88-99; it reads REQSRRSYDDQL. The tract at residues 88-129 is disordered; the sequence is REQSRRSYDDQLRSGSPPKSPRTTVHDKSAHQTHSSWTPPNA. The segment covering 119 to 129 has biased composition (polar residues); sequence QTHSSWTPPNA. A helical transmembrane segment spans residues 156–175; the sequence is VLGYCLLLMLAGMGLHYIAF. The tract at residues 212-241 is disordered; it reads QQERQRLGQRQPPPSEPTQGPEIVPRGAGP.

Its subcellular location is the membrane. The polypeptide is DnaJ homolog subfamily C member 4 (DNAJC4) (Homo sapiens (Human)).